The primary structure comprises 549 residues: Undecaprenyl phosphate-alpha-4-amino-4-deoxy-L-arabinose arabinosyl transferase 2 (549 aa).

12 consecutive transmembrane segments (helical) span residues 9–29 (LLLG…GLWI), 80–102 (LFGV…FLIA), 112–132 (SFVC…AGYA), 133–153 (NLDP…WFAL), 176–196 (FMTK…PWML), 204–224 (LLLY…PWAL), 259–279 (FYLP…PVAF), 290–310 (GIAF…LSNG), 312–332 (LPTY…HALA), 342–362 (ALGL…IGLV), 377–397 (SLVL…LQAF), and 402–422 (CWAA…AALP).

It belongs to the glycosyltransferase 83 family.

It is found in the cell inner membrane. It carries out the reaction 4-amino-4-deoxy-alpha-L-arabinopyranosyl di-trans,octa-cis-undecaprenyl phosphate + lipid IVA = lipid IIA + di-trans,octa-cis-undecaprenyl phosphate.. It participates in lipopolysaccharide metabolism; 4-amino-4-deoxy-beta-L-arabinose-lipid A biosynthesis. Catalyzes the transfer of the L-Ara4N moiety of the glycolipid undecaprenyl phosphate-alpha-L-Ara4N to lipid A. The modified arabinose is attached to lipid A and is required for resistance to polymyxin and cationic antimicrobial peptides. In Pseudomonas fluorescens (strain Pf0-1), this protein is Undecaprenyl phosphate-alpha-4-amino-4-deoxy-L-arabinose arabinosyl transferase 2.